A 622-amino-acid polypeptide reads, in one-letter code: Dynein axonemal assembly factor 1 (622 aa).

Polar residues predominate over residues 1-11 (MHPEVSEQQAD). The interval 1–80 (MHPEVSEQQA…ARNDRDDRGP (80 aa)) is disordered. Residues 32–42 (VRKEEINETKE) are compositionally biased toward basic and acidic residues. The segment covering 48 to 59 (STTSCQSQKQQS) has biased composition (low complexity). The span at 62–80 (SRLECRSGYARNDRDDRGP) shows a compositional bias: basic and acidic residues. LRR repeat units follow at residues 101–123 (ALND…EEYT), 124–145 (GLRC…QAQS), 146–167 (ELRC…EPLQ), 168–189 (KLDA…SCLP), 190–211 (VLNT…QHLG), and 215–236 (RLCV…SVLE). The region spanning 249 to 288 (NPVTKHIPNYRRTVTVRLKQLTYLDDRPVFPKDRACAEAW) is the LRRCT domain. Residues 326-336 (EERKKARDKGE) are compositionally biased toward basic and acidic residues. The disordered stretch occupies residues 326 to 363 (EERKKARDKGETPLPDSEESSSTSPEAQEKPPLGETQE). A compositionally biased stretch (low complexity) spans 337–351 (TPLPDSEESSSTSPE). Phosphoserine is present on residues serine 349, serine 464, and serine 487. 2 disordered regions span residues 481–505 (SSLS…TPTG) and 535–622 (TATT…FGLD). 2 stretches are compositionally biased toward polar residues: residues 535-552 (TATT…TTRP) and 568-578 (EPNQSLPAQSS).

Belongs to the DNAAF1 family.

The protein localises to the cell projection. The protein resides in the cilium. In terms of biological role, cilium-specific protein required for the stability of the ciliary architecture. Plays a role in cytoplasmic preassembly of dynein arms. Involved in regulation of microtubule-based cilia and actin-based brush border microvilli. This chain is Dynein axonemal assembly factor 1 (Dnaaf1), found in Peromyscus californicus (California mouse).